The following is a 156-amino-acid chain: Ribosomal RNA large subunit methyltransferase H (156 aa).

S-adenosyl-L-methionine contacts are provided by residues Leu73, Gly104, and 123–128 (LSDLTL).

Belongs to the RNA methyltransferase RlmH family. In terms of assembly, homodimer.

The protein resides in the cytoplasm. The catalysed reaction is pseudouridine(1915) in 23S rRNA + S-adenosyl-L-methionine = N(3)-methylpseudouridine(1915) in 23S rRNA + S-adenosyl-L-homocysteine + H(+). Specifically methylates the pseudouridine at position 1915 (m3Psi1915) in 23S rRNA. This is Ribosomal RNA large subunit methyltransferase H from Leptothrix cholodnii (strain ATCC 51168 / LMG 8142 / SP-6) (Leptothrix discophora (strain SP-6)).